The following is a 103-amino-acid chain: Histone H4 (103 aa).

The segment covering 1-14 (MSGRGKGGKGLGKG) has biased composition (gly residues). The tract at residues 1–20 (MSGRGKGGKGLGKGGAKRHR) is disordered. Ser2 carries the post-translational modification N-acetylserine. An N6-acetyl-N6-methyllysine; alternate mark is found at Lys6 and Lys13. Lys17 is modified (N6-acetyllysine). The DNA-binding element occupies 17–21 (KRHRK). Lys21 is subject to N6-methyllysine.

Belongs to the histone H4 family. The nucleosome is a histone octamer containing two molecules each of H2A, H2B, H3 and H4 assembled in one H3-H4 heterotetramer and two H2A-H2B heterodimers. The octamer wraps approximately 147 bp of DNA.

It localises to the nucleus. The protein localises to the chromosome. Functionally, core component of nucleosome. Nucleosomes wrap and compact DNA into chromatin, limiting DNA accessibility to the cellular machineries which require DNA as a template. Histones thereby play a central role in transcription regulation, DNA repair, DNA replication and chromosomal stability. DNA accessibility is regulated via a complex set of post-translational modifications of histones, also called histone code, and nucleosome remodeling. The protein is Histone H4 of Holothuria tubulosa (Tubular sea cucumber).